The chain runs to 940 residues: UvrABC system protein A (940 aa).

32-39 (GLSGSGKS) serves as a coordination point for ATP. The C4-type zinc-finger motif lies at 252-279 (CIDCGISIDEISPRLFSFNSPFGKCDYC). 2 consecutive ABC transporter domains span residues 309-589 (WANT…EGSL) and 609-937 (SNGK…HYLK). ATP is bound at residue 641–648 (GVSGSGKS). The C4-type zinc finger occupies 740–766 (CEACKGDGIIKIEMQFLSDVYVPCEIC).

This sequence belongs to the ABC transporter superfamily. UvrA family. In terms of assembly, forms a heterotetramer with UvrB during the search for lesions.

Its subcellular location is the cytoplasm. Functionally, the UvrABC repair system catalyzes the recognition and processing of DNA lesions. UvrA is an ATPase and a DNA-binding protein. A damage recognition complex composed of 2 UvrA and 2 UvrB subunits scans DNA for abnormalities. When the presence of a lesion has been verified by UvrB, the UvrA molecules dissociate. This is UvrABC system protein A from Clostridium tetani (strain Massachusetts / E88).